The following is an 813-amino-acid chain: Protein SBE22 (813 aa).

Disordered stretches follow at residues 1-66, 107-240, and 331-359; these read MIRP…HGHA, EIFS…GEFG, and QKDS…NRES. Basic and acidic residues predominate over residues 56–66; the sequence is RPSDNLFHGHA. Positions 107–121 are enriched in low complexity; the sequence is EIFSTSSSDTQSNIS. Over residues 127 to 138 the composition is skewed to basic and acidic residues; the sequence is SEDHSFGMDKSV. 3 stretches are compositionally biased toward polar residues: residues 139 to 160, 169 to 200, and 214 to 234; these read DNSS…NGDS, VSVN…NRSM, and KNSS…NRSV.

It belongs to the SBE2 family.

The protein localises to the cytoplasm. It is found in the golgi apparatus. In terms of biological role, with SBE2, is involved in cell wall integrity and polarity processes like bud growth. The sequence is that of Protein SBE22 (SBE22) from Candida glabrata (strain ATCC 2001 / BCRC 20586 / JCM 3761 / NBRC 0622 / NRRL Y-65 / CBS 138) (Yeast).